The chain runs to 307 residues: Small ribosomal subunit biogenesis GTPase RsgA (307 aa).

Positions 1-20 (MPSEHPFSDGISTPNPKETM) are disordered. The span at 10 to 20 (GISTPNPKETM) shows a compositional bias: polar residues. In terms of domain architecture, CP-type G spans 85–242 (RQDAWKTKLI…LIDSPGLQEF (158 aa)). GTP contacts are provided by residues 135–138 (NKAD) and 184–192 (GQSGMGKST). Positions 266, 271, 273, and 279 each coordinate Zn(2+).

Belongs to the TRAFAC class YlqF/YawG GTPase family. RsgA subfamily. In terms of assembly, monomer. Associates with 30S ribosomal subunit, binds 16S rRNA. The cofactor is Zn(2+).

It is found in the cytoplasm. Functionally, one of several proteins that assist in the late maturation steps of the functional core of the 30S ribosomal subunit. Helps release RbfA from mature subunits. May play a role in the assembly of ribosomal proteins into the subunit. Circularly permuted GTPase that catalyzes slow GTP hydrolysis, GTPase activity is stimulated by the 30S ribosomal subunit. The polypeptide is Small ribosomal subunit biogenesis GTPase RsgA (Neisseria meningitidis serogroup A / serotype 4A (strain DSM 15465 / Z2491)).